A 454-amino-acid polypeptide reads, in one-letter code: MHWVFHCILIILACLRFTCADTPANCTYEDAHGRWKFHIGDYQSKCPEKLNSKQSVVISLLYPDIAIDEFGNRGHWTLIYNQGFEVTINHRKWLVIFAYKSNGEFNCHKSMPMWTHDTLIDSGSVCSGKIGVHDKFHINKLFGSKSFGRTLYHINPSFVGKINAHQKSWRGEIYPELSKYTIDELRNRAGGVKSMVTRPSVLNRKTPSKELISLTGNLPLEFDWTSPPDGSRSPVTPIRNQGICGSCYASPSAAALEARIRLVSNFSEQPILSPQTVVDCSPYSEGCNGGFPFLIAGKYGEDFGLPQKIVIPYTGEDTGKCTVSKNCTRYYTTDYSYIGGYYGATNEKLMQLELISNGPFPVGFEVYEDFQFYKEGIYHHTTVQTDHYNFNPFELTNHAVLLVGYGVDKLSGEPYWKVKNSWGVEWGEQGYFRILRGTDECGVESLGVRFDPVL.

An N-terminal signal peptide occupies residues 1–20 (MHWVFHCILIILACLRFTCA). The propeptide occupies 21 to 217 (DTPANCTYED…SKELISLTGN (197 aa)). N-linked (GlcNAc...) asparagine glycosylation occurs at Asn25. Disulfide bonds link Cys26/Cys107, Cys244/Cys287, and Cys280/Cys321. Residue Cys247 is part of the active site. A glycan (N-linked (GlcNAc...) asparagine) is linked at Asn265. Phe291 contributes to the chloride binding site. An N-linked (GlcNAc...) asparagine glycan is attached at Asn326. Residue Tyr337 coordinates chloride. Catalysis depends on residues His398 and Asn420.

It belongs to the peptidase C1 family. Chloride serves as cofactor.

Its subcellular location is the lysosome. In terms of biological role, thiol protease. Has a role as a digestive enzyme. The sequence is that of Cathepsin C from Schistosoma mansoni (Blood fluke).